A 517-amino-acid polypeptide reads, in one-letter code: 6-phosphogluconate dehydrogenase, decarboxylating (517 aa).

NADP(+)-binding positions include 35-40 (GLAVMG), 58-60 (NRT), 100-102 (VKA), and asparagine 128. Substrate-binding positions include asparagine 128 and 154–156 (SGG). Lysine 208 functions as the Proton acceptor in the catalytic mechanism. A substrate-binding site is contributed by 211–212 (HN). The active-site Proton donor is glutamate 215. Substrate is bound by residues tyrosine 216, lysine 286, arginine 313, arginine 474, and histidine 480.

This sequence belongs to the 6-phosphogluconate dehydrogenase family. In terms of assembly, homodimer.

It carries out the reaction 6-phospho-D-gluconate + NADP(+) = D-ribulose 5-phosphate + CO2 + NADPH. The protein operates within carbohydrate degradation; pentose phosphate pathway; D-ribulose 5-phosphate from D-glucose 6-phosphate (oxidative stage): step 3/3. Functionally, catalyzes the oxidative decarboxylation of 6-phosphogluconate to ribulose 5-phosphate and CO(2), with concomitant reduction of NADP to NADPH. This is 6-phosphogluconate dehydrogenase, decarboxylating (DOR14) from Candida albicans (Yeast).